A 64-amino-acid polypeptide reads, in one-letter code: Large ribosomal subunit protein eL37 (64 aa).

Positions 20, 23, 35, and 38 each coordinate Zn(2+). The C4-type zinc finger occupies 20 to 38 (CRRCGRRAYHVRKKACAAC).

Belongs to the eukaryotic ribosomal protein eL37 family. Zn(2+) serves as cofactor.

Functionally, binds to the 23S rRNA. The polypeptide is Large ribosomal subunit protein eL37 (Methanococcus vannielii (strain ATCC 35089 / DSM 1224 / JCM 13029 / OCM 148 / SB)).